The primary structure comprises 511 residues: ATP synthase subunit alpha, plastid (511 aa).

170–177 (GDRQTGKT) is an ATP binding site.

The protein belongs to the ATPase alpha/beta chains family. As to quaternary structure, F-type ATPases have 2 components, CF(1) - the catalytic core - and CF(0) - the membrane proton channel. CF(1) has five subunits: alpha(3), beta(3), gamma(1), delta(1), epsilon(1). CF(0) has four main subunits: a, b, b' and c.

It localises to the plastid membrane. It catalyses the reaction ATP + H2O + 4 H(+)(in) = ADP + phosphate + 5 H(+)(out). Its function is as follows. Produces ATP from ADP in the presence of a proton gradient across the membrane. The alpha chain is a regulatory subunit. The chain is ATP synthase subunit alpha, plastid from Cuscuta reflexa (Southern Asian dodder).